Here is a 413-residue protein sequence, read N- to C-terminus: Phosphopentomutase (413 aa).

Residues Asp-11, Asp-306, His-311, Asp-347, His-348, and His-359 each coordinate Mn(2+).

The protein belongs to the phosphopentomutase family. Mn(2+) serves as cofactor.

Its subcellular location is the cytoplasm. The catalysed reaction is 2-deoxy-alpha-D-ribose 1-phosphate = 2-deoxy-D-ribose 5-phosphate. The enzyme catalyses alpha-D-ribose 1-phosphate = D-ribose 5-phosphate. Its pathway is carbohydrate degradation; 2-deoxy-D-ribose 1-phosphate degradation; D-glyceraldehyde 3-phosphate and acetaldehyde from 2-deoxy-alpha-D-ribose 1-phosphate: step 1/2. In terms of biological role, isomerase that catalyzes the conversion of deoxy-ribose 1-phosphate (dRib-1-P) and ribose 1-phosphate (Rib-1-P) to deoxy-ribose 5-phosphate (dRib-5-P) and ribose 5-phosphate (Rib-5-P), respectively. In Helicobacter pylori (strain Shi470), this protein is Phosphopentomutase.